An 87-amino-acid chain; its full sequence is uncharacterized protein (87 aa).

The protein belongs to the YlmC/YmxH family.

This is an uncharacterized protein from Clostridium acetobutylicum (strain ATCC 824 / DSM 792 / JCM 1419 / IAM 19013 / LMG 5710 / NBRC 13948 / NRRL B-527 / VKM B-1787 / 2291 / W).